Here is a 515-residue protein sequence, read N- to C-terminus: Acetyltransferase sphE (515 aa).

Residues His-184 and Asp-438 each act as proton acceptor in the active site.

Belongs to the plant acyltransferase family. As to quaternary structure, monomer.

It catalyses the reaction sphingofungin B + acetyl-CoA = sphingofungin C + CoA. It participates in secondary metabolite biosynthesis. In terms of biological role, acetyltransferase; part of the gene cluster that mediates the biosynthesis of sphingofungins, bioactive molecules acting as sphingolipid inhibitors via inhibiting serine palmitoyl transferase (SPT). Within the pathway, sphE catalyzes the O-acetylation of the C-5 hydroxyl group of sphingofungin B to produce sphingofungin C. SphE can also convert sphingofungin B1 into sphingofungin C1 and sphingofungin B2 into sphingofungin C2. Sphingofungin biosynthesis starts with the PKS sphB that produces an C18 polyketide precursor 3-hydroxyoctadeca-4,10-dienoyl-ACP containing one delta-6 desaturation and one delta-12 desaturation. The aminoacyl transferase sphA uses the sphB product to produce 3-keto-presphingofungin by adding an aminomalonate molecule. SphF then reduces the C-3 ketone of 3-keto-presphingofungin which leads to presphingofungin. The cytochrome P450 monooxygenase sphH converts presphingofungin into sphingofungin B1 which is further converted to sphingofungin B by the dioxygenase sphC. SphC is also able to convert presphingofungin into sphingofungin B2. The acetyltransferase sphE acetylates sphingofungin B to produce sphingofungin C, but can also convert sphingofungin B1 into sphingofungin C1 and sphingofungin B2 into sphingofungin C2. Finally, sphingofungin C can be spontaneously converted into sphingofungin D. This Aspergillus fumigatus (strain CBS 144.89 / FGSC A1163 / CEA10) (Neosartorya fumigata) protein is Acetyltransferase sphE.